A 169-amino-acid chain; its full sequence is Ribosome maturation factor RimM (169 aa).

The 73-residue stretch at 94–166 (EEGFYDHELE…TATITPPDGL (73 aa)) folds into the PRC barrel domain.

This sequence belongs to the RimM family. In terms of assembly, binds ribosomal protein uS19.

Its subcellular location is the cytoplasm. Functionally, an accessory protein needed during the final step in the assembly of 30S ribosomal subunit, possibly for assembly of the head region. Essential for efficient processing of 16S rRNA. May be needed both before and after RbfA during the maturation of 16S rRNA. It has affinity for free ribosomal 30S subunits but not for 70S ribosomes. In Corynebacterium efficiens (strain DSM 44549 / YS-314 / AJ 12310 / JCM 11189 / NBRC 100395), this protein is Ribosome maturation factor RimM.